The following is a 151-amino-acid chain: UPF0178 protein Hhal_1913 (151 aa).

Belongs to the UPF0178 family.

The chain is UPF0178 protein Hhal_1913 from Halorhodospira halophila (strain DSM 244 / SL1) (Ectothiorhodospira halophila (strain DSM 244 / SL1)).